A 526-amino-acid polypeptide reads, in one-letter code: Microphthalmia-associated transcription factor (526 aa).

Residues 1–54 are disordered; the sequence is MQSESGIVPDFEVGEEFHEEPKTYYELKSQPLKSSSSAEHPGASKPPISSSSMT. The residue at position 5 (Ser5) is a Phosphoserine; by MTOR. Residues 15-25 are compositionally biased toward basic and acidic residues; that stretch reads EEFHEEPKTYY. Residues 41–54 show a composition bias toward low complexity; sequence PGASKPPISSSSMT. Ser180 is modified (phosphoserine; by MAPK). Residues 224–295 form a transactivation region; the sequence is DDVIDDIISL…PNIKRELTAC (72 aa). Ser280 is modified (phosphoserine; by MARK3). A Glycyl lysine isopeptide (Lys-Gly) (interchain with G-Cter in SUMO) cross-link involves residue Lys289. One can recognise a bHLH domain in the interval 311–364; the sequence is QKKDNHNLIERRRRFNINDRIKELGTLIPKSNDPDMRWNKGTILKASVDYIRKL. Residues 355–402 adopt a coiled-coil conformation; it reads KASVDYIRKLQREQQRAKELENRQKKLEHANRHLLLRIQELEMQARAH. Residues 374–395 are leucine-zipper; sequence LENRQKKLEHANRHLLLRIQEL. The DNA-binding regulation stretch occupies residues 401 to 431; sequence AHGLSLIPSTGLCSPDLVNRIIKQEPVLENC. Ser405 bears the Phosphoserine; by GSK3 mark. Ser414 carries the phosphoserine modification. A Glycyl lysine isopeptide (Lys-Gly) (interchain with G-Cter in SUMO) cross-link involves residue Lys423. Position 491 is a phosphoserine (Ser491). Positions 496–526 are disordered; sequence TDPLLSSVSPGASKTSSRRSSMSMEETEHTC. Over residues 499–509 the composition is skewed to polar residues; it reads LLSSVSPGASK. At Ser516 the chain carries Phosphoserine; by RPS6KA1.

It belongs to the MiT/TFE family. As to quaternary structure, homodimer or heterodimer; dimerization is mediated via the coiled coil region. Efficient DNA binding requires dimerization with another bHLH protein. Binds DNA in the form of homodimer or heterodimer with either TFE3, TFEB or TFEC. Interacts with small GTPases Rag (RagA/RRAGA, RagB/RRAGB, RagC/RRAGC and/or RagD/RRAGD); promoting its recruitment to lysosomal membrane in the presence of nutrients. Interacts with KARS1. Identified in a complex with HINT1 and CTNNB1. Interacts with VSX2. In terms of processing, when nutrients are present, phosphorylation by MTOR at Ser-5 via non-canonical mTORC1 pathway promotes ubiquitination by the SCF(BTRC) complex, followed by degradation. Phosphorylation at Ser-405 significantly enhances the ability to bind the tyrosinase promoter. Phosphorylation by MARK3/cTAK1 at Ser-280 promotes association with 14-3-3/YWHA adapters and retention in the cytosol. Phosphorylated at Ser-180 and Ser-516 following KIT signaling, triggering a short live activation: Phosphorylation at Ser-180 and Ser-516 by MAPK and RPS6KA1, respectively, activate the transcription factor activity but also promote ubiquitination and subsequent degradation by the proteasome. Phosphorylated in response to blue light (415nm). Post-translationally, ubiquitinated by the SCF(BTRC) and SCF(FBXW11) complexes following phosphorylation ar Ser-5 by MTOR, leading to its degradation by the proteasome. Ubiquitinated following phosphorylation at Ser-180, leading to subsequent degradation by the proteasome. Deubiquitinated by USP13, preventing its degradation. In terms of tissue distribution, expressed in melanocytes (at protein level). As to expression, expressed in the retinal pigment epithelium, brain, and placenta. Expressed in the kidney. Expressed in the kidney and retinal pigment epithelium. In terms of tissue distribution, expressed in the kidney. As to expression, expressed in melanocytes.

Its subcellular location is the nucleus. It localises to the cytoplasm. The protein localises to the lysosome membrane. In terms of biological role, transcription factor that acts as a master regulator of melanocyte survival and differentiation as well as melanosome biogenesis. Binds to M-boxes (5'-TCATGTG-3') and symmetrical DNA sequences (E-boxes) (5'-CACGTG-3') found in the promoter of pigmentation genes, such as tyrosinase (TYR). Involved in the cellular response to amino acid availability by acting downstream of MTOR: in the presence of nutrients, MITF phosphorylation by MTOR promotes its inactivation. Upon starvation or lysosomal stress, inhibition of MTOR induces MITF dephosphorylation, resulting in transcription factor activity. Plays an important role in melanocyte development by regulating the expression of tyrosinase (TYR) and tyrosinase-related protein 1 (TYRP1). Plays a critical role in the differentiation of various cell types, such as neural crest-derived melanocytes, mast cells, osteoclasts and optic cup-derived retinal pigment epithelium. In Homo sapiens (Human), this protein is Microphthalmia-associated transcription factor.